The primary structure comprises 89 residues: Probable Fe(2+)-trafficking protein (89 aa).

The protein belongs to the Fe(2+)-trafficking protein family.

In terms of biological role, could be a mediator in iron transactions between iron acquisition and iron-requiring processes, such as synthesis and/or repair of Fe-S clusters in biosynthetic enzymes. In Stenotrophomonas maltophilia (strain K279a), this protein is Probable Fe(2+)-trafficking protein.